A 380-amino-acid chain; its full sequence is MAKKDYYDTLGVPKNASDEDIKKAYRKLAMKHHPDRNQGDTSKVSEDKFKEAKEAYEMLSDAQKRAAYDQYGHAGVDPNRGGGPGAEGFGGFAEAFGDIFGDVFGGQRGGAQGGGGRQVYRGGDLSYAMEVTLEEAAAGKEAQIRIPSWDDCGICHGTGAKPGTKVATCTTCHGHGVVQMRQGFFSVQQTCPQCKGSGKLIPSPCVACHGVGKTKNNKTLEVKIPAGIDDGMRIRSTGNGEPGTNGGPPGDLYIEIRLKKHDIFERDGDDLHCSMPISFMTAALGGEIEVPTLAGKAAIDIPEGTQAGKQFRLRGKGIKGVRSSYPGDLYCHITVETPVKLTEHQRKLLKELDESIKKGGAKHSPSEEGWTDKLKNFFGA.

The region spanning 5 to 72 (DYYDTLGVPK…QKRAAYDQYG (68 aa)) is the J domain. The tract at residues 21–47 (IKKAYRKLAMKHHPDRNQGDTSKVSED) is disordered. The span at 24-34 (AYRKLAMKHHP) shows a compositional bias: basic residues. The span at 35–47 (DRNQGDTSKVSED) shows a compositional bias: basic and acidic residues. The CR-type zinc-finger motif lies at 139 to 217 (GKEAQIRIPS…CHGVGKTKNN (79 aa)). Zn(2+) contacts are provided by Cys152, Cys155, Cys169, Cys172, Cys191, Cys194, Cys205, and Cys208. CXXCXGXG motif repeat units lie at residues 152–159 (CGICHGTG), 169–176 (CTTCHGHG), 191–198 (CPQCKGSG), and 205–212 (CVACHGVG).

It belongs to the DnaJ family. As to quaternary structure, homodimer. It depends on Zn(2+) as a cofactor.

It localises to the cytoplasm. Its function is as follows. Participates actively in the response to hyperosmotic and heat shock by preventing the aggregation of stress-denatured proteins and by disaggregating proteins, also in an autonomous, DnaK-independent fashion. Unfolded proteins bind initially to DnaJ; upon interaction with the DnaJ-bound protein, DnaK hydrolyzes its bound ATP, resulting in the formation of a stable complex. GrpE releases ADP from DnaK; ATP binding to DnaK triggers the release of the substrate protein, thus completing the reaction cycle. Several rounds of ATP-dependent interactions between DnaJ, DnaK and GrpE are required for fully efficient folding. Also involved, together with DnaK and GrpE, in the DNA replication of plasmids through activation of initiation proteins. This is Chaperone protein DnaJ from Polaromonas naphthalenivorans (strain CJ2).